The primary structure comprises 307 residues: Coproporphyrin III ferrochelatase (307 aa).

Residues Y12, R29, 45-46 (RY), S53, and Y124 each bind Fe-coproporphyrin III. H181 and E263 together coordinate Fe(2+).

It belongs to the ferrochelatase family.

It is found in the cytoplasm. The enzyme catalyses Fe-coproporphyrin III + 2 H(+) = coproporphyrin III + Fe(2+). The protein operates within porphyrin-containing compound metabolism; protoheme biosynthesis. Functionally, involved in coproporphyrin-dependent heme b biosynthesis. Catalyzes the insertion of ferrous iron into coproporphyrin III to form Fe-coproporphyrin III. In Staphylococcus aureus (strain COL), this protein is Coproporphyrin III ferrochelatase.